A 1006-amino-acid polypeptide reads, in one-letter code: GATA zinc finger domain-containing protein 7 (1006 aa).

A compositionally biased stretch (low complexity) spans 55–70; it reads SSSNNFINNHHNNQSS. 5 disordered regions span residues 55-116, 128-248, 381-499, 528-638, and 657-800; these read SSSN…APNL, PFQN…DPFY, NAKK…PLST, STSG…SSNS, and YNSN…NYHD. Residues 71-86 show a composition bias toward polar residues; that stretch reads DIHSISQSTPNLSTLI. 2 stretches are compositionally biased toward low complexity: residues 87 to 110 and 128 to 158; these read SSSS…NSSS and PFQN…CNNS. The segment covering 159–168 has biased composition (polar residues); sequence PVSSSTNYIP. Residues 169–180 are compositionally biased toward low complexity; that stretch reads NNSTSNVVLNSS. Positions 181–190 are enriched in polar residues; it reads IPTTSPNVLS. 2 stretches are compositionally biased toward low complexity: residues 205-241 and 388-410; these read NNNN…NNNN and TNTN…NNNN. Residues 411-426 are compositionally biased toward polar residues; that stretch reads IQQANVNTSPISTSTT. Low complexity-rich tracts occupy residues 427 to 456 and 468 to 496; these read PNNN…QQAQ and SITP…GASP. Polar residues predominate over residues 528–539; sequence STSGMLSTTNPY. A compositionally biased stretch (low complexity) spans 540-557; sequence THHSPNTSSTVSSSVTSP. Positions 558-589 are enriched in polar residues; the sequence is LINQYGTNPTLTNNHSFYGSLASNQNTGASDG. 2 stretches are compositionally biased toward low complexity: residues 590-601 and 619-638; these read NNNNNNNNNNNN and SSNP…SSNS. Over residues 662–680 the composition is skewed to polar residues; the sequence is GSGMTTPQSLGHSPSHNDY. Composition is skewed to low complexity over residues 681 to 706 and 713 to 785; these read NSNN…NSNN and SNSS…SSNN. The GATA-type zinc finger occupies 842–867; it reads CHNCGTKNTPEWRRGPSGPATLCNAC. The tract at residues 925–957 is disordered; it reads NNASSSSSSSSSSSSSSSSSSSTSSYSSSSYNI. The segment covering 928-954 has biased composition (low complexity); sequence SSSSSSSSSSSSSSSSSSSTSSYSSSS.

The polypeptide is GATA zinc finger domain-containing protein 7 (gtaG) (Dictyostelium discoideum (Social amoeba)).